Here is a 602-residue protein sequence, read N- to C-terminus: GTP-binding protein 2 (602 aa).

Residues 18 to 64 (GPAMGGNLKARGAGGSSSCGGPKGKKKNGRNRGGKANNPPYLPPEAE) form a disordered region. Residues 29–39 (GAGGSSSCGGP) are compositionally biased toward gly residues. Residues 40–50 (KGKKKNGRNRG) are compositionally biased toward basic residues. The region spanning 170–398 (FLDLRVAVLG…LNILPPLTNS (229 aa)) is the tr-type G domain. Residues 179–186 (GNVDSGKS), 260–264 (DLAGH), and 316–319 (SKVD) each bind GTP.

This sequence belongs to the TRAFAC class translation factor GTPase superfamily. Classic translation factor GTPase family. GTPBP1 subfamily. As to expression, predominantly expressed in thymus, spleen, and testis. Expressed at lower levels in brain, heart, lung, kidney, and skeletal muscle. In testis, specifically expressed in spermatocytes and round spermatids.

The polypeptide is GTP-binding protein 2 (Mus musculus (Mouse)).